The chain runs to 109 residues: Ubiquitin-related modifier 1 homolog (109 aa).

The residue at position 109 (G109) is a 1-thioglycine. G109 participates in a covalent cross-link: Glycyl lysine isopeptide (Gly-Lys) (interchain with K-? in acceptor proteins).

This sequence belongs to the URM1 family. C-terminal thiocarboxylation occurs in 2 steps, it is first acyl-adenylated (-COAMP) via the hesA/moeB/thiF part of the MOCS3 homolog, then thiocarboxylated (-COSH) via the rhodanese domain of the MOCS3 homolog.

Its subcellular location is the cytoplasm. The protein operates within tRNA modification; 5-methoxycarbonylmethyl-2-thiouridine-tRNA biosynthesis. In terms of biological role, acts as a sulfur carrier required for 2-thiolation of mcm(5)S(2)U at tRNA wobble positions of cytosolic tRNA(Lys), tRNA(Glu) and tRNA(Gln). Serves as sulfur donor in tRNA 2-thiolation reaction by being thiocarboxylated (-COSH) at its C-terminus by MOCS3. The sulfur is then transferred to tRNA to form 2-thiolation of mcm(5)S(2)U. Also acts as a ubiquitin-like protein (UBL) that is covalently conjugated via an isopeptide bond to lysine residues of target proteins. The thiocarboxylated form serves as substrate for conjugation and oxidative stress specifically induces the formation of UBL-protein conjugates. The polypeptide is Ubiquitin-related modifier 1 homolog (Anopheles gambiae (African malaria mosquito)).